Consider the following 388-residue polypeptide: Succinate--CoA ligase [ADP-forming] subunit beta (388 aa).

The 236-residue stretch at 9-244 (KSLFAEYGLP…PSQDDAREAH (236 aa)) folds into the ATP-grasp domain. ATP contacts are provided by residues Lys-46, 53–55 (GRG), Glu-99, Thr-102, and Glu-107. Mg(2+)-binding residues include Asn-199 and Asp-213. Residues Asn-264 and 321–323 (GIV) contribute to the substrate site.

Belongs to the succinate/malate CoA ligase beta subunit family. In terms of assembly, heterotetramer of two alpha and two beta subunits. Mg(2+) serves as cofactor.

It carries out the reaction succinate + ATP + CoA = succinyl-CoA + ADP + phosphate. It catalyses the reaction GTP + succinate + CoA = succinyl-CoA + GDP + phosphate. It participates in carbohydrate metabolism; tricarboxylic acid cycle; succinate from succinyl-CoA (ligase route): step 1/1. Its function is as follows. Succinyl-CoA synthetase functions in the citric acid cycle (TCA), coupling the hydrolysis of succinyl-CoA to the synthesis of either ATP or GTP and thus represents the only step of substrate-level phosphorylation in the TCA. The beta subunit provides nucleotide specificity of the enzyme and binds the substrate succinate, while the binding sites for coenzyme A and phosphate are found in the alpha subunit. This is Succinate--CoA ligase [ADP-forming] subunit beta from Shewanella woodyi (strain ATCC 51908 / MS32).